A 434-amino-acid polypeptide reads, in one-letter code: Histidinol dehydrogenase (434 aa).

Substrate is bound by residues S242, Q264, and H267. The Zn(2+) site is built by Q264 and H267. Residues E332 and H333 each act as proton acceptor in the active site. Positions 333, 366, 420, and 425 each coordinate substrate. Position 366 (D366) interacts with Zn(2+). Zn(2+) is bound at residue H425.

The protein belongs to the histidinol dehydrogenase family. It depends on Zn(2+) as a cofactor.

It catalyses the reaction L-histidinol + 2 NAD(+) + H2O = L-histidine + 2 NADH + 3 H(+). It participates in amino-acid biosynthesis; L-histidine biosynthesis; L-histidine from 5-phospho-alpha-D-ribose 1-diphosphate: step 9/9. In terms of biological role, catalyzes the sequential NAD-dependent oxidations of L-histidinol to L-histidinaldehyde and then to L-histidine. This Desulfotalea psychrophila (strain LSv54 / DSM 12343) protein is Histidinol dehydrogenase.